The following is a 92-amino-acid chain: Small ribosomal subunit protein uS19 (92 aa).

The protein belongs to the universal ribosomal protein uS19 family.

Functionally, protein S19 forms a complex with S13 that binds strongly to the 16S ribosomal RNA. This Vibrio campbellii (strain ATCC BAA-1116) protein is Small ribosomal subunit protein uS19.